We begin with the raw amino-acid sequence, 242 residues long: Ribosomal RNA small subunit methyltransferase G (242 aa).

Residues glycine 78, phenylalanine 83, 129–130 (AE), and arginine 148 contribute to the S-adenosyl-L-methionine site. The segment at 221-242 (TKKRYPRKAGVPEKSPIGGKHD) is disordered.

The protein belongs to the methyltransferase superfamily. RNA methyltransferase RsmG family.

It is found in the cytoplasm. Functionally, specifically methylates the N7 position of a guanine in 16S rRNA. This is Ribosomal RNA small subunit methyltransferase G from Oenococcus oeni (strain ATCC BAA-331 / PSU-1).